The following is a 660-amino-acid chain: tRNA 5-methylaminomethyl-2-thiouridine biosynthesis bifunctional protein MnmC (660 aa).

Residues 1-235 (MTITRHARID…KWEVLRGAFI (235 aa)) form a tRNA (mnm(5)s(2)U34)-methyltransferase region. An FAD-dependent cmnm(5)s(2)U34 oxidoreductase region spans residues 266 to 660 (IGAGLAGCAT…LRGLIRGGGK (395 aa)).

It in the N-terminal section; belongs to the methyltransferase superfamily. tRNA (mnm(5)s(2)U34)-methyltransferase family. The protein in the C-terminal section; belongs to the DAO family. It depends on FAD as a cofactor.

The protein localises to the cytoplasm. The catalysed reaction is 5-aminomethyl-2-thiouridine(34) in tRNA + S-adenosyl-L-methionine = 5-methylaminomethyl-2-thiouridine(34) in tRNA + S-adenosyl-L-homocysteine + H(+). Catalyzes the last two steps in the biosynthesis of 5-methylaminomethyl-2-thiouridine (mnm(5)s(2)U) at the wobble position (U34) in tRNA. Catalyzes the FAD-dependent demodification of cmnm(5)s(2)U34 to nm(5)s(2)U34, followed by the transfer of a methyl group from S-adenosyl-L-methionine to nm(5)s(2)U34, to form mnm(5)s(2)U34. The chain is tRNA 5-methylaminomethyl-2-thiouridine biosynthesis bifunctional protein MnmC from Pseudomonas syringae pv. tomato (strain ATCC BAA-871 / DC3000).